The following is a 238-amino-acid chain: uncharacterized protein (238 aa).

Residues Arg-3–Ser-116 enclose the Response regulatory domain. Asp-54 is modified (4-aspartylphosphate). One can recognise an HTH LytTR-type domain in the interval Ile-136–Ile-237.

This is an uncharacterized protein from Yersinia pestis.